Consider the following 943-residue polypeptide: Nuclear receptor coactivator 7 (943 aa).

Met1 carries the post-translational modification N-acetylmethionine. Basic and acidic residues predominate over residues 1 to 15 (MDTKEEKKEQKERKQ). Residues 1–32 (MDTKEEKKEQKERKQSYFARLKKKKQAKQNAE) adopt a coiled-coil conformation. Residues 1 to 83 (MDTKEEKKEQ…RKSNQLKEIR (83 aa)) are disordered. Ser92 carries the phosphoserine modification. The LysM domain occupies 117 to 160 (MEYTAGSQDTLNSVALKFNVTPNKLVELNKLFTHTIVPGQVLFV). Thr137 carries the post-translational modification Phosphothreonine. A disordered region spans residues 169 to 189 (TIQLSSSTPGATVSPSSSDAE). Polar residues predominate over residues 177 to 187 (PGATVSPSSSD). A phosphoserine mark is found at Ser182, Ser186, Ser211, Ser212, and Ser214. The tract at residues 334-369 (EKRQQNGERTLALDAKSVRSPEESTERTCTRIEPPD) is disordered. The segment covering 349-369 (KSVRSPEESTERTCTRIEPPD) has biased composition (basic and acidic residues). Phosphoserine is present on residues Ser442, Ser498, and Ser500. Residues 486–499 (EKQDEAPEVDKHSG) are compositionally biased toward basic and acidic residues. Disordered regions lie at residues 486–507 (EKQD…LGES) and 543–576 (LSDR…NKEP). Positions 782–943 (ALLENMHIEQ…VQDLEVWTFE (162 aa)) constitute a TLDc domain.

Belongs to the OXR1 family. In terms of assembly, interacts with ESR1, ESR2A, ESR2B, THRB, PPARG and RARA in a ligand-inducible manner. Interacts with the heterodimer AHR-ARNT. In terms of tissue distribution, highly expressed in brain and kidney. Weakly expressed in mammary gland, lung and testis. In brain, expression is found in neurons of cerebral cortex, thalamus, hypothalamus, hippocampus, cerebellum, striatum and choroid plexus.

The protein localises to the nucleus. Enhances the transcriptional activities of several nuclear receptors. Involved in the coactivation of different nuclear receptors, such as ESR1, THRB, PPARG and RARA. This chain is Nuclear receptor coactivator 7 (Ncoa7), found in Mus musculus (Mouse).